The sequence spans 176 residues: MKIPKEGDFITIQSYKHDGNLHRTWRDTMVLKTNENSIIGVNDHTLVTESDDRRWVTREPAIVYFHKKFWFNIIAMIREEGVSYYCNLASPFVLDNEALKYIDYDLDVKVFKDGEKKLLDVEEYERHRRKMHYPKEIDHILKENVKILVDWINNEKGPFSKEYVEIWYNRYHQLKK.

Arg-23 acts as the Proton donor in catalysis. Mg(2+) contacts are provided by Asn-87, Asp-103, Asp-105, Asp-107, Asp-120, and Glu-123.

This sequence belongs to the Ntdp family. Mg(2+) serves as cofactor.

It catalyses the reaction a ribonucleoside 5'-triphosphate + H2O = a ribonucleoside 5'-diphosphate + phosphate + H(+). The enzyme catalyses a ribonucleoside 5'-diphosphate + H2O = a ribonucleoside 5'-phosphate + phosphate + H(+). Its function is as follows. Has nucleoside phosphatase activity towards nucleoside triphosphates and nucleoside diphosphates. The protein is Nucleoside triphosphate/diphosphate phosphatase (yjjG) of Lactococcus lactis subsp. lactis (strain IL1403) (Streptococcus lactis).